Here is a 175-residue protein sequence, read N- to C-terminus: Ferritin light chain (175 aa).

Ser-2 is modified (N-acetylserine). Residues Gln-7–Val-156 form the Ferritin-like diiron domain. Positions 54, 57, 58, 61, and 64 each coordinate Fe cation. A catalytic site for iron oxidation region spans residues Glu-54–Glu-61.

It belongs to the ferritin family. Oligomer of 24 subunits. There are two types of subunits: L (light) chain and H (heavy) chain. The major chain can be light or heavy, depending on the species and tissue type. The functional molecule forms a roughly spherical shell with a diameter of 12 nm and contains a central cavity into which the insoluble mineral iron core is deposited. Interacts with NCOA4.

Its subcellular location is the cytoplasmic vesicle. It localises to the autophagosome. The protein resides in the cytoplasm. It is found in the autolysosome. Its function is as follows. Stores iron in a soluble, non-toxic, readily available form. Important for iron homeostasis. Iron is taken up in the ferrous form and deposited as ferric hydroxides after oxidation. Also plays a role in delivery of iron to cells. Mediates iron uptake in capsule cells of the developing kidney. Delivery to lysosomes by the cargo receptor NCOA4 for autophagic degradation and release or iron. This chain is Ferritin light chain (FTL), found in Equus caballus (Horse).